The primary structure comprises 49 residues: MDLSCSCATGGSCTCASSCKCKEYKCTSCKKNCCSCCPMGCAKCAQGCT.

Positions 1–29 (MDLSCSCATGGSCTCASSCKCKEYKCTSC) are beta. Residues Cys5, Cys7, Cys13, Cys15, Cys19, Cys21, Cys26, Cys29, Cys33, Cys34, Cys36, Cys37, Cys41, Cys44, and Cys48 each coordinate a divalent metal cation. Residues 30-49 (KKNCCSCCPMGCAKCAQGCT) are alpha.

This sequence belongs to the metallothionein superfamily. Type 1 family.

Metallothioneins have a high content of cysteine residues that bind various heavy metals. This chain is Putative metallothionein MT1DP (MT1DP), found in Homo sapiens (Human).